Here is a 273-residue protein sequence, read N- to C-terminus: Undecaprenyl-diphosphatase (273 aa).

Helical transmembrane passes span 1–21 (MEPI…FLPV), 39–59 (PALF…LIVF), 63–83 (LGMM…GIAP), 92–112 (LKLA…GLGL), 118–138 (LFFS…LLWL), 165–185 (GLAV…GLFL), 195–215 (FSFL…AVDL), 225–245 (ATVL…KVLI), and 252–272 (RFYL…WIGM).

The protein belongs to the UppP family.

The protein localises to the cell inner membrane. The catalysed reaction is di-trans,octa-cis-undecaprenyl diphosphate + H2O = di-trans,octa-cis-undecaprenyl phosphate + phosphate + H(+). Catalyzes the dephosphorylation of undecaprenyl diphosphate (UPP). Confers resistance to bacitracin. The chain is Undecaprenyl-diphosphatase from Desulfosudis oleivorans (strain DSM 6200 / JCM 39069 / Hxd3) (Desulfococcus oleovorans).